A 324-amino-acid chain; its full sequence is Glutathione synthetase (324 aa).

In terms of domain architecture, ATP-grasp spans 124–309 (KLAIAQFREF…VAGMFIDALE (186 aa)). 150–206 (HAEQGDVIFKPLDGMGGAGIFRVGADGMNLGSVIETLTHNGTRTVMAQQYIPAIRDG) serves as a coordination point for ATP. Mg(2+) is bound by residues Glu280 and Asn282.

This sequence belongs to the prokaryotic GSH synthase family. Mg(2+) is required as a cofactor. It depends on Mn(2+) as a cofactor.

The enzyme catalyses gamma-L-glutamyl-L-cysteine + glycine + ATP = glutathione + ADP + phosphate + H(+). The protein operates within sulfur metabolism; glutathione biosynthesis; glutathione from L-cysteine and L-glutamate: step 2/2. In Ralstonia nicotianae (strain ATCC BAA-1114 / GMI1000) (Ralstonia solanacearum), this protein is Glutathione synthetase.